The primary structure comprises 96 residues: Large ribosomal subunit protein bL25 (96 aa).

It belongs to the bacterial ribosomal protein bL25 family. As to quaternary structure, part of the 50S ribosomal subunit; part of the 5S rRNA/L5/L18/L25 subcomplex. Contacts the 5S rRNA. Binds to the 5S rRNA independently of L5 and L18.

Functionally, this is one of the proteins that binds to the 5S RNA in the ribosome where it forms part of the central protuberance. The sequence is that of Large ribosomal subunit protein bL25 from Buchnera aphidicola subsp. Schizaphis graminum (strain Sg).